We begin with the raw amino-acid sequence, 267 residues long: Hydroxynaphthalene reductase-like protein Arp2 (267 aa).

The NADP(+) site is built by I25, N45, D71, and N98. Residues S147 and S148 each act as proton donor in the active site. Positions 162, 166, 195, and 197 each coordinate NADP(+). Y162 serves as the catalytic Proton acceptor. K166 acts as the Lowers pKa of active site Tyr in catalysis.

Belongs to the short-chain dehydrogenases/reductases (SDR) family.

Functionally, hydroxynaphthalene reductase-like protein; part of the Pks2 gene cluster that mediates the formation of infectious structures (appressoria), enabling these fungi to kill insects faster. The product of the Pks2 gene cluster is different from the one of Pks1 and has still not been identified. This chain is Hydroxynaphthalene reductase-like protein Arp2, found in Metarhizium majus (strain ARSEF 297).